A 329-amino-acid polypeptide reads, in one-letter code: Malate dehydrogenase (329 aa).

Position 13–19 (13–19) interacts with NAD(+); the sequence is GAAGNIS. The substrate site is built by R94 and R100. Residues N107, Q114, and 131–133 each bind NAD(+); that span reads VGN. Substrate-binding residues include N133 and R164. The active-site Proton acceptor is H189.

The protein belongs to the LDH/MDH superfamily. MDH type 2 family.

It carries out the reaction (S)-malate + NAD(+) = oxaloacetate + NADH + H(+). Its function is as follows. Catalyzes the reversible oxidation of malate to oxaloacetate. This Psychrobacter cryohalolentis (strain ATCC BAA-1226 / DSM 17306 / VKM B-2378 / K5) protein is Malate dehydrogenase.